A 229-amino-acid chain; its full sequence is NAD-dependent protein deacetylase (229 aa).

Positions 1–229 constitute a Deacetylase sirtuin-type domain; it reads MNKLNEALKK…SDAVKVFAEI (229 aa). NAD(+) is bound by residues A20, R32, Q96, I98, D99, H114, T181, S182, N205, and V223. Residues I98 and D99 each contribute to the nicotinamide site. H114 (proton acceptor) is an active-site residue.

The protein belongs to the sirtuin family. Class U subfamily.

It localises to the cytoplasm. It carries out the reaction N(6)-acetyl-L-lysyl-[protein] + NAD(+) + H2O = 2''-O-acetyl-ADP-D-ribose + nicotinamide + L-lysyl-[protein]. NAD-dependent protein deacetylase which modulates the activities of several enzymes which are inactive in their acetylated form. This chain is NAD-dependent protein deacetylase, found in Listeria monocytogenes serotype 4b (strain F2365).